Consider the following 432-residue polypeptide: Adenylosuccinate synthetase (432 aa).

GTP is bound by residues 12-18 (GDEGKGK) and 40-42 (GHT). The active-site Proton acceptor is the D13. Mg(2+) is bound by residues D13 and G40. IMP is bound by residues 13 to 16 (DEGK), 38 to 41 (NAGH), T132, R146, Q226, T241, and R305. H41 serves as the catalytic Proton donor. Position 301–307 (301–307 (TVTGRKR)) interacts with substrate. Residues R307, 333 to 335 (KLD), and 415 to 417 (STS) contribute to the GTP site.

This sequence belongs to the adenylosuccinate synthetase family. In terms of assembly, homodimer. Requires Mg(2+) as cofactor.

Its subcellular location is the cytoplasm. It carries out the reaction IMP + L-aspartate + GTP = N(6)-(1,2-dicarboxyethyl)-AMP + GDP + phosphate + 2 H(+). It functions in the pathway purine metabolism; AMP biosynthesis via de novo pathway; AMP from IMP: step 1/2. Functionally, plays an important role in the de novo pathway of purine nucleotide biosynthesis. Catalyzes the first committed step in the biosynthesis of AMP from IMP. This chain is Adenylosuccinate synthetase, found in Chelativorans sp. (strain BNC1).